A 375-amino-acid chain; its full sequence is Alcohol dehydrogenase 1C (375 aa).

The residue at position 2 (S2) is an N-acetylserine. S23 is subject to Phosphoserine. 7 residues coordinate Zn(2+): C47, H68, C98, C101, C104, C112, and C175. NAD(+) is bound by residues 200 to 205 (GLGGVG), D224, K229, I270, 293 to 295 (VGV), 318 to 320 (AIF), and R370.

Belongs to the zinc-containing alcohol dehydrogenase family. In terms of assembly, dimer of identical or non-identical chains of class I alcohol dehydrogenase: ADH1A, ADH1B, and ADH1C. Zn(2+) serves as cofactor.

It is found in the cytoplasm. It catalyses the reaction a primary alcohol + NAD(+) = an aldehyde + NADH + H(+). The catalysed reaction is ethanol + NAD(+) = acetaldehyde + NADH + H(+). Alcohol dehydrogenase. Exhibits high activity for ethanol oxidation and plays a major role in ethanol catabolism. The polypeptide is Alcohol dehydrogenase 1C (ADH1C) (Homo sapiens (Human)).